We begin with the raw amino-acid sequence, 686 residues long: Methionine--tRNA ligase (686 aa).

Positions 13 to 23 match the 'HIGH' region motif; sequence PYANGQIHIGH. Zn(2+)-binding residues include cysteine 144, cysteine 147, cysteine 157, and cysteine 160. Positions 335–339 match the 'KMSKS' region motif; it reads KMSKS. Lysine 338 contacts ATP. Residues 580–686 form the tRNA-binding domain; that stretch reads DFAKVDLRVA…EGAVPGMRIG (107 aa).

It belongs to the class-I aminoacyl-tRNA synthetase family. MetG type 1 subfamily. Homodimer. It depends on Zn(2+) as a cofactor.

Its subcellular location is the cytoplasm. The enzyme catalyses tRNA(Met) + L-methionine + ATP = L-methionyl-tRNA(Met) + AMP + diphosphate. In terms of biological role, is required not only for elongation of protein synthesis but also for the initiation of all mRNA translation through initiator tRNA(fMet) aminoacylation. In Cupriavidus necator (strain ATCC 17699 / DSM 428 / KCTC 22496 / NCIMB 10442 / H16 / Stanier 337) (Ralstonia eutropha), this protein is Methionine--tRNA ligase.